Reading from the N-terminus, the 497-residue chain is Guanosine-5'-triphosphate,3'-diphosphate pyrophosphatase (497 aa).

This sequence belongs to the GppA/Ppx family. GppA subfamily.

It carries out the reaction guanosine 3'-diphosphate 5'-triphosphate + H2O = guanosine 3',5'-bis(diphosphate) + phosphate + H(+). Its pathway is purine metabolism; ppGpp biosynthesis; ppGpp from GTP: step 2/2. Its function is as follows. Catalyzes the conversion of pppGpp to ppGpp. Guanosine pentaphosphate (pppGpp) is a cytoplasmic signaling molecule which together with ppGpp controls the 'stringent response', an adaptive process that allows bacteria to respond to amino acid starvation, resulting in the coordinated regulation of numerous cellular activities. This is Guanosine-5'-triphosphate,3'-diphosphate pyrophosphatase from Vibrio cholerae serotype O1 (strain ATCC 39541 / Classical Ogawa 395 / O395).